We begin with the raw amino-acid sequence, 342 residues long: Flagellar P-ring protein (342 aa).

The N-terminal stretch at 1-19 (MKRVFLWLIFVLAFHKLLA) is a signal peptide.

It belongs to the FlgI family. In terms of assembly, the basal body constitutes a major portion of the flagellar organelle and consists of four rings (L,P,S, and M) mounted on a central rod.

It is found in the periplasm. It localises to the bacterial flagellum basal body. Its function is as follows. Assembles around the rod to form the L-ring and probably protects the motor/basal body from shearing forces during rotation. This Helicobacter pylori (strain P12) protein is Flagellar P-ring protein.